Reading from the N-terminus, the 155-residue chain is MTDQQAPVFQIQRVYLKEASLEQPNSPAILLEQESPTVDIQLGVNAAPVAEGVFEVTVTATVQTKIKDKTVFLVEATQAGIFEIRNLPQEQMNQIMGIACPQIVYPYLRGNVADLVQRGGFPPVHLSEINFQAMFEQQQQQQAGAGADAPQLVTQ.

It belongs to the SecB family. Homotetramer, a dimer of dimers. One homotetramer interacts with 1 SecA dimer.

It localises to the cytoplasm. Its function is as follows. One of the proteins required for the normal export of preproteins out of the cell cytoplasm. It is a molecular chaperone that binds to a subset of precursor proteins, maintaining them in a translocation-competent state. It also specifically binds to its receptor SecA. The protein is Protein-export protein SecB of Albidiferax ferrireducens (strain ATCC BAA-621 / DSM 15236 / T118) (Rhodoferax ferrireducens).